Consider the following 110-residue polypeptide: Large ribosomal subunit protein uL22 (110 aa).

It belongs to the universal ribosomal protein uL22 family. As to quaternary structure, part of the 50S ribosomal subunit.

Functionally, this protein binds specifically to 23S rRNA; its binding is stimulated by other ribosomal proteins, e.g. L4, L17, and L20. It is important during the early stages of 50S assembly. It makes multiple contacts with different domains of the 23S rRNA in the assembled 50S subunit and ribosome. The globular domain of the protein is located near the polypeptide exit tunnel on the outside of the subunit, while an extended beta-hairpin is found that lines the wall of the exit tunnel in the center of the 70S ribosome. In Shigella flexneri serotype 5b (strain 8401), this protein is Large ribosomal subunit protein uL22.